Reading from the N-terminus, the 104-residue chain is Small ribosomal subunit protein bS6c (104 aa).

The protein belongs to the bacterial ribosomal protein bS6 family.

The protein localises to the plastid. The protein resides in the cyanelle. In terms of biological role, binds together with bS18 to 16S ribosomal RNA. The polypeptide is Small ribosomal subunit protein bS6c (rps6) (Cyanophora paradoxa).